The sequence spans 85 residues: Putative membrane protein insertion efficiency factor (85 aa).

This sequence belongs to the UPF0161 family.

It localises to the cell inner membrane. Could be involved in insertion of integral membrane proteins into the membrane. The polypeptide is Putative membrane protein insertion efficiency factor (Shewanella sediminis (strain HAW-EB3)).